The chain runs to 336 residues: Protein FPV127 (336 aa).

The segment at 1–22 is disordered; the sequence is MGGGLVLPTRDPPKEQDTSETA.

It belongs to the poxviruses A16/G9/J5 family.

The sequence is that of Protein FPV127 from Vertebrata (FPV).